The following is a 1091-amino-acid chain: Protein JSN1 (1091 aa).

2 disordered regions span residues 31–51 (EYENNGESNSQLQQQPQKLGS) and 75–131 (HHSK…GSLT). A compositionally biased stretch (polar residues) spans 99-111 (TVASKTPRASPSR). Ser129 carries the post-translational modification Phosphoserine. At Thr131 the chain carries Phosphothreonine. A phosphoserine mark is found at Ser160 and Ser168. Residues 340 to 426 (NTISISNVFP…APSKISFAKI (87 aa)) enclose the RRM domain. Composition is skewed to low complexity over residues 482 to 494 (QQSQQSQHQNHSS) and 507 to 520 (NNNNSMHGNNNNSA). Disordered regions lie at residues 482-534 (QQSQ…PPPN) and 568-591 (HKGTSDTQNFGPLPEPLSGREFDP). The PUM-HD domain occupies 557 to 913 (QINSLIKKSL…RLLEEVGLAS (357 aa)). The span at 568–577 (HKGTSDTQNF) shows a compositional bias: polar residues. 5 Pumilio repeats span residues 617 to 652 (AMLDELPELSSDYLGNTIVQKLFEHSSDIIKDIMLR), 653 to 689 (KTSKYLTSMGVHKNGTWACQKMITMAHTPRQIMQVTQ), 690 to 724 (GVKDYCTPLINDQFGNYVIQCVLKFGFPWNQFIFE), 725 to 760 (SIIANFWVIVQNRYGARAVRACLEAHDIVTPEQSIV), and 801 to 837 (RLTKRIVELCGHRLASLTILKVLNYRGDDNARKIILD). Residues 911 to 981 (LASPSSTHNK…GSSASTLSPG (71 aa)) are disordered. Residue Ser913 is modified to Phosphoserine. 2 stretches are compositionally biased toward low complexity: residues 915–935 (SSTHNKTKQQQQQHHNSSISH) and 951–979 (SVSSVKSGGSKHTTMNTTTTNGSSASTLS).

This chain is Protein JSN1 (JSN1), found in Saccharomyces cerevisiae (strain ATCC 204508 / S288c) (Baker's yeast).